We begin with the raw amino-acid sequence, 97 residues long: uncharacterized protein (97 aa).

This is an uncharacterized protein from Enterobacteria phage T4 (Bacteriophage T4).